We begin with the raw amino-acid sequence, 224 residues long: MYSQTKIAIPIFQAKKEDVIKVAEDCIEKGADVLEFRIDALDNPNFDDIKEIIEEINFPIIATNRISSEGGSFKGSEEERIDILLKCAPLVDYVDIELQSDDRYIKQIHDTGVTTIVSYHDFHKTPEINEIMYIVEKEQKLGDIAKVAFMPNDLDDTLKILAILSHCENTIAISMSDLGSYTRVMASKFDSPITFAAGRDVTAPGQIDIETMKSLLNMDLNLME.

3-dehydroquinate is bound by residues 35 to 37 and arginine 65; that span reads EFR. Histidine 120 functions as the Proton donor/acceptor in the catalytic mechanism. Lysine 146 functions as the Schiff-base intermediate with substrate in the catalytic mechanism. Positions 183, 202, and 206 each coordinate 3-dehydroquinate.

It belongs to the type-I 3-dehydroquinase family. As to quaternary structure, homodimer.

The enzyme catalyses 3-dehydroquinate = 3-dehydroshikimate + H2O. The protein operates within metabolic intermediate biosynthesis; chorismate biosynthesis; chorismate from D-erythrose 4-phosphate and phosphoenolpyruvate: step 3/7. Functionally, involved in the third step of the chorismate pathway, which leads to the biosynthesis of aromatic amino acids. Catalyzes the cis-dehydration of 3-dehydroquinate (DHQ) and introduces the first double bond of the aromatic ring to yield 3-dehydroshikimate. This is 3-dehydroquinate dehydratase from Methanobrevibacter smithii (strain ATCC 35061 / DSM 861 / OCM 144 / PS).